Reading from the N-terminus, the 560-residue chain is Putative transport protein VFMJ11_0927 (560 aa).

5 helical membrane-spanning segments follow: residues 8-28 (LLSQ…LFIA), 37-57 (LGSS…GYTF), 66-86 (FMLF…GIFL), 94-114 (LLVL…GHYF), and 161-181 (NLSV…ILLA). 2 consecutive RCK C-terminal domains span residues 203–292 (RGIG…FRNG) and 293–376 (KEVF…KIGF). 5 consecutive transmembrane segments (helical) span residues 386-406 (LLAF…TMSF), 409-429 (VTFG…LGFL), 451-471 (GLLV…NEYF), 478-498 (VLAA…LVGA), and 539-559 (AGTY…MILL).

Belongs to the AAE transporter (TC 2.A.81) family. YbjL subfamily.

It localises to the cell membrane. The polypeptide is Putative transport protein VFMJ11_0927 (Aliivibrio fischeri (strain MJ11) (Vibrio fischeri)).